Consider the following 734-residue polypeptide: Ribosomal RNA large subunit methyltransferase K/L (734 aa).

Positions 43-154 (VGYRSCLWSR…RNQLTLSLDL (112 aa)) constitute a THUMP domain.

It belongs to the methyltransferase superfamily. RlmKL family.

Its subcellular location is the cytoplasm. It catalyses the reaction guanosine(2445) in 23S rRNA + S-adenosyl-L-methionine = N(2)-methylguanosine(2445) in 23S rRNA + S-adenosyl-L-homocysteine + H(+). The catalysed reaction is guanosine(2069) in 23S rRNA + S-adenosyl-L-methionine = N(2)-methylguanosine(2069) in 23S rRNA + S-adenosyl-L-homocysteine + H(+). Its function is as follows. Specifically methylates the guanine in position 2445 (m2G2445) and the guanine in position 2069 (m7G2069) of 23S rRNA. The polypeptide is Ribosomal RNA large subunit methyltransferase K/L (Hydrogenovibrio crunogenus (strain DSM 25203 / XCL-2) (Thiomicrospira crunogena)).